Consider the following 394-residue polypeptide: 8-amino-7-oxononanoate synthase (394 aa).

Arg21 lines the substrate pocket. Gly112–Tyr113 serves as a coordination point for pyridoxal 5'-phosphate. His137 provides a ligand contact to substrate. Residues Ser183, His211, and Thr239 each contribute to the pyridoxal 5'-phosphate site. An N6-(pyridoxal phosphate)lysine modification is found at Lys242. Residue Thr358 participates in substrate binding.

Belongs to the class-II pyridoxal-phosphate-dependent aminotransferase family. BioF subfamily. In terms of assembly, homodimer. Pyridoxal 5'-phosphate serves as cofactor.

The catalysed reaction is 6-carboxyhexanoyl-[ACP] + L-alanine + H(+) = (8S)-8-amino-7-oxononanoate + holo-[ACP] + CO2. It functions in the pathway cofactor biosynthesis; biotin biosynthesis. In terms of biological role, catalyzes the decarboxylative condensation of pimeloyl-[acyl-carrier protein] and L-alanine to produce 8-amino-7-oxononanoate (AON), [acyl-carrier protein], and carbon dioxide. The sequence is that of 8-amino-7-oxononanoate synthase from Burkholderia pseudomallei (strain K96243).